Consider the following 235-residue polypeptide: NADH-quinone oxidoreductase subunit C (235 aa).

Belongs to the complex I 30 kDa subunit family. In terms of assembly, NDH-1 is composed of 14 different subunits. Subunits NuoB, C, D, E, F, and G constitute the peripheral sector of the complex.

It is found in the cell membrane. The catalysed reaction is a quinone + NADH + 5 H(+)(in) = a quinol + NAD(+) + 4 H(+)(out). Functionally, NDH-1 shuttles electrons from NADH, via FMN and iron-sulfur (Fe-S) centers, to quinones in the respiratory chain. The immediate electron acceptor for the enzyme in this species is believed to be a menaquinone. Couples the redox reaction to proton translocation (for every two electrons transferred, four hydrogen ions are translocated across the cytoplasmic membrane), and thus conserves the redox energy in a proton gradient. This chain is NADH-quinone oxidoreductase subunit C, found in Mycobacterium avium (strain 104).